A 993-amino-acid polypeptide reads, in one-letter code: Ephrin type-A receptor 7 (993 aa).

Positions 1–27 (MVLRSRLPPWIMLCSVWLLRFAHTGEA) are cleaved as a signal peptide. Topologically, residues 28–550 (QAAKEVILLD…TAVSSEQNPV (523 aa)) are extracellular. An Eph LBD domain is found at 32–210 (EVILLDSKAQ…YYKKCWSIIE (179 aa)). 2 Fibronectin type-III domains span residues 331–441 (PPSA…TGQA) and 442–537 (APSQ…TLEE). N-linked (GlcNAc...) asparagine glycans are attached at residues asparagine 343 and asparagine 410. The chain crosses the membrane as a helical span at residues 551 to 571 (IIIAVVAVAGTIILVFMVFGF). Residues 572–993 (IIGRRHCGYS…LHLHGTGIQV (422 aa)) lie on the Cytoplasmic side of the membrane. Residues tyrosine 603 and tyrosine 609 each carry the phosphotyrosine; by autocatalysis modification. The Protein kinase domain occupies 628-889 (IKIERVIGAG…QIVGILDKMI (262 aa)). ATP is bound by residues 634-642 (IGAGEFGEV) and lysine 660. The active-site Proton acceptor is the aspartate 753. Phosphotyrosine; by autocatalysis is present on residues tyrosine 786 and tyrosine 935. One can recognise an SAM domain in the interval 918-982 (TTFCSVGEWL…MSSIQTMRAQ (65 aa)). The PDZ-binding motif lies at 991–993 (IQV).

It belongs to the protein kinase superfamily. Tyr protein kinase family. Ephrin receptor subfamily. Heterotetramer upon binding of the ligand. The heterotetramer is composed of an ephrin dimer and a receptor dimer. Oligomerization is probably required to induce biological responses. In terms of processing, phosphorylated.

Its subcellular location is the cell membrane. It catalyses the reaction L-tyrosyl-[protein] + ATP = O-phospho-L-tyrosyl-[protein] + ADP + H(+). Its function is as follows. Receptor tyrosine kinase which binds promiscuously GPI-anchored ephrin-A family ligands residing on adjacent cells, leading to contact-dependent bidirectional signaling into neighboring cells. The signaling pathway downstream of the receptor is referred to as forward signaling while the signaling pathway downstream of the ephrin ligand is referred to as reverse signaling. Among GPI-anchored ephrin-A ligands, EFNA5 is a cognate/functional ligand for EPHA7 and their interaction regulates brain development modulating cell-cell adhesion and repulsion. Has a repellent activity on axons and is for instance involved in the guidance of corticothalamic axons and in the proper topographic mapping of retinal axons to the colliculus. May also regulate brain development through a caspase(CASP3)-dependent proapoptotic activity. Forward signaling may result in activation of components of the ERK signaling pathway including MAP2K1, MAP2K2, MAPK1 and MAPK3 which are phosphorylated upon activation of EPHA7. The chain is Ephrin type-A receptor 7 (EPHA7) from Gallus gallus (Chicken).